We begin with the raw amino-acid sequence, 118 residues long: Large ribosomal subunit protein bL20c (118 aa).

It belongs to the bacterial ribosomal protein bL20 family.

The protein localises to the plastid. The protein resides in the chloroplast. Binds directly to 23S ribosomal RNA and is necessary for the in vitro assembly process of the 50S ribosomal subunit. It is not involved in the protein synthesizing functions of that subunit. The chain is Large ribosomal subunit protein bL20c from Adiantum capillus-veneris (Maidenhair fern).